Consider the following 429-residue polypeptide: Histidine--tRNA ligase (429 aa).

Belongs to the class-II aminoacyl-tRNA synthetase family. As to quaternary structure, homodimer.

It localises to the cytoplasm. It catalyses the reaction tRNA(His) + L-histidine + ATP = L-histidyl-tRNA(His) + AMP + diphosphate + H(+). This is Histidine--tRNA ligase from Pseudomonas putida (strain W619).